The sequence spans 367 residues: Apolipoprotein A-V (367 aa).

A signal peptide spans 1–20 (MVAVLTWALALLSAFATVQT). The residue at position 56 (Ser-56) is a Phosphoserine. Positions 71–90 (LGPLSGQGREPPGLPHDPEG) are disordered.

The protein belongs to the apolipoprotein A1/A4/E family. As to quaternary structure, interacts with GPIHBP1. Interacts with SORL1; this interaction leads to APOA5 internalization and sorting either to lysosomes and degradation, or to the trans-Golgi network. In terms of processing, phosphorylated by FAM20C in the extracellular medium.

Its subcellular location is the secreted. It localises to the early endosome. It is found in the late endosome. The protein localises to the golgi apparatus. The protein resides in the trans-Golgi network. Minor apolipoprotein mainly associated with HDL and to a lesser extent with VLDL. May also be associated with chylomicrons. Important determinant of plasma triglyceride (TG) levels by both being a potent stimulator of apo-CII lipoprotein lipase (LPL) TG hydrolysis and an inhibitor of the hepatic VLDL-TG production rate (without affecting the VLDL-apoB production rate). Activates poorly lecithin:cholesterol acyltransferase (LCAT) and does not enhance efflux of cholesterol from macrophages. Binds heparin. This is Apolipoprotein A-V (APOA5) from Leptonychotes weddellii (Weddell seal).